The following is a 61-amino-acid chain: MAMRLVTAEEIPKLHKLVQDNKMILACQTKEKTLKILSDYLQKEFGMHANETTIASYDGYI.

This is an uncharacterized protein from Rickettsia conorii (strain ATCC VR-613 / Malish 7).